The primary structure comprises 351 residues: Biotin synthase (351 aa).

A Radical SAM core domain is found at 73 to 298 (PEVEVEGIIS…RTILRYSGGR (226 aa)). The [4Fe-4S] cluster site is built by cysteine 88, cysteine 92, and cysteine 95. The [2Fe-2S] cluster site is built by cysteine 131, cysteine 164, cysteine 223, and arginine 293.

This sequence belongs to the radical SAM superfamily. Biotin synthase family. Homodimer. It depends on [4Fe-4S] cluster as a cofactor. [2Fe-2S] cluster is required as a cofactor.

The catalysed reaction is (4R,5S)-dethiobiotin + (sulfur carrier)-SH + 2 reduced [2Fe-2S]-[ferredoxin] + 2 S-adenosyl-L-methionine = (sulfur carrier)-H + biotin + 2 5'-deoxyadenosine + 2 L-methionine + 2 oxidized [2Fe-2S]-[ferredoxin]. It participates in cofactor biosynthesis; biotin biosynthesis; biotin from 7,8-diaminononanoate: step 2/2. Functionally, catalyzes the conversion of dethiobiotin (DTB) to biotin by the insertion of a sulfur atom into dethiobiotin via a radical-based mechanism. The chain is Biotin synthase from Frankia alni (strain DSM 45986 / CECT 9034 / ACN14a).